Consider the following 122-residue polypeptide: Sarcocystatin-A (122 aa).

An N-terminal signal peptide occupies residues 1 to 20 (MKYVLILCVITLATVAYAQP). A Pyrrolidone carboxylic acid modification is found at Gln21. Residues 67-71 (QVVSG) carry the Secondary area of contact motif.

It belongs to the cystatin family.

Its function is as follows. Selectively inhibits the activity of cysteine proteinase of hemocytes, protecting developing adult tissue in pupae from attack by the proteinase. The polypeptide is Sarcocystatin-A (Sarcophaga peregrina (Flesh fly)).